A 148-amino-acid chain; its full sequence is UPF0591 membrane protein C15E1.02c (148 aa).

Transmembrane regions (helical) follow at residues 14 to 34, 80 to 102, and 122 to 142; these read AILL…GPLM, LLQL…VFGA, and ILVK…ALIG.

The protein belongs to the UPF0591 family.

It localises to the membrane. This chain is UPF0591 membrane protein C15E1.02c, found in Schizosaccharomyces pombe (strain 972 / ATCC 24843) (Fission yeast).